The sequence spans 286 residues: MTTIIDGKALAKKINSQTKELVAQLKEKQNIIPGIAVVIAGDDVASLIYTRNKHNKAIKLGINSVLKKFPADVSQAELLAEIEKLNHDDTIDAILVQQPLPPQLDPEVITNAILPTKDVDGLNPLNLGKLFANQHGNYPVACTPRGIMRMLAEYNIDLQGKNAVIVGRSILVGKPLLALLNNANATVTMAGRSTGDLSALTKTADILIVATGVPNLIKATDVKPGAVVIDVGINRLSNGKLTGDVDFEAVKTKAQAITPVPGGVGPMTIATLMEQTVDLAWWRHHG.

Residues G167–S169 and I233 contribute to the NADP(+) site.

It belongs to the tetrahydrofolate dehydrogenase/cyclohydrolase family. Homodimer.

It catalyses the reaction (6R)-5,10-methylene-5,6,7,8-tetrahydrofolate + NADP(+) = (6R)-5,10-methenyltetrahydrofolate + NADPH. The enzyme catalyses (6R)-5,10-methenyltetrahydrofolate + H2O = (6R)-10-formyltetrahydrofolate + H(+). It functions in the pathway one-carbon metabolism; tetrahydrofolate interconversion. In terms of biological role, catalyzes the oxidation of 5,10-methylenetetrahydrofolate to 5,10-methenyltetrahydrofolate and then the hydrolysis of 5,10-methenyltetrahydrofolate to 10-formyltetrahydrofolate. This is Bifunctional protein FolD from Limosilactobacillus reuteri (strain DSM 20016) (Lactobacillus reuteri).